Consider the following 390-residue polypeptide: Phosphopentomutase (390 aa).

Positions 14, 286, 291, 327, 328, and 339 each coordinate Mn(2+).

It belongs to the phosphopentomutase family. The cofactor is Mn(2+).

It is found in the cytoplasm. It catalyses the reaction 2-deoxy-alpha-D-ribose 1-phosphate = 2-deoxy-D-ribose 5-phosphate. The catalysed reaction is alpha-D-ribose 1-phosphate = D-ribose 5-phosphate. It participates in carbohydrate degradation; 2-deoxy-D-ribose 1-phosphate degradation; D-glyceraldehyde 3-phosphate and acetaldehyde from 2-deoxy-alpha-D-ribose 1-phosphate: step 1/2. Isomerase that catalyzes the conversion of deoxy-ribose 1-phosphate (dRib-1-P) and ribose 1-phosphate (Rib-1-P) to deoxy-ribose 5-phosphate (dRib-5-P) and ribose 5-phosphate (Rib-5-P), respectively. In Exiguobacterium sibiricum (strain DSM 17290 / CCUG 55495 / CIP 109462 / JCM 13490 / 255-15), this protein is Phosphopentomutase.